Here is a 721-residue protein sequence, read N- to C-terminus: mRNA (2'-O-methyladenosine-N(6)-)-methyltransferase (721 aa).

2 stretches are compositionally biased toward polar residues: residues methionine 1–lysine 10 and proline 19–proline 36. Positions methionine 1–isoleucine 37 are disordered. A WW domain is found at glutamate 43–leucine 77. Positions proline 93–proline 170 are disordered. Over residues isoleucine 132 to proline 148 the composition is skewed to low complexity. Residues arginine 239 and arginine 269 each contribute to the substrate site. Asparagine 558 to phenylalanine 561 is a binding site for S-adenosyl-L-methionine. Residues glutamate 563 and tryptophan 593 to proline 597 contribute to the substrate site. Phenylalanine 619–histidine 621 serves as a coordination point for S-adenosyl-L-methionine. Residues serine 675–serine 686 show a composition bias toward low complexity. The segment at serine 675–threonine 721 is disordered. Residues alanine 702 to threonine 721 show a composition bias toward polar residues.

This sequence belongs to the CAPAM family.

The protein resides in the nucleus. It catalyses the reaction a 5'-end (N(7)-methyl 5'-triphosphoguanosine)-(2'-O-methyladenosine) in mRNA + S-adenosyl-L-methionine = a 5'-end (N(7)-methyl 5'-triphosphoguanosine)-(N(6),2'-O-dimethyladenosine) in mRNA + S-adenosyl-L-homocysteine + H(+). With respect to regulation, cap-specific adenosine methyltransferase activity is inhibited by zinc. Functionally, cap-specific adenosine methyltransferase that catalyzes formation of N(6),2'-O-dimethyladenosine cap (m6A(m)) by methylating the adenosine at the second transcribed position of capped mRNAs. The protein is mRNA (2'-O-methyladenosine-N(6)-)-methyltransferase (pcif1) of Danio rerio (Zebrafish).